Here is a 405-residue protein sequence, read N- to C-terminus: MPAELRRLAVLLLLLSARAALAQPWRNENYERPVDLEGSGDDDPFGDDELDDIYSGSGSGYFEQESGLETAVSLTTDTSVPLPTTVAVLPVTLVQPMATPFELFPTEDTSPEQTTSVLYIPKITEAPVIPSWKTTTASTTASDSPSTTSTTTTTAATTTTTTTTISTTVATSKPTTTQRFLPPFVTKAATTRATTLETPTTSIPETSVLTEVTTSRLVPSSTAKPRSLPKPSTSRTAEPTEKSTALPSSPTTLPPTEAPQVEPGELTTVLDSDLEVPTSSGPSGDFEIQEEEETTRPELGNEVVAVVTPPAAPGLGKNAEPGLIDNTIESGSSAAQLPQKNILERKEVLIAVIVGGVVGALFAAFLVMLLIYRMKKKDEGSYTLEEPKQANVTYQKPDKQEEFYA.

The signal sequence occupies residues 1–22; sequence MPAELRRLAVLLLLLSARAALA. The Extracellular segment spans residues 23–347; sequence QPWRNENYER…PQKNILERKE (325 aa). A disordered region spans residues 31-59; the sequence is ERPVDLEGSGDDDPFGDDELDDIYSGSGS. Over residues 38 to 52 the composition is skewed to acidic residues; sequence GSGDDDPFGDDELDD. 5 O-linked (Xyl...) (glycosaminoglycan) serine glycosylation sites follow: serine 39, serine 55, serine 57, serine 59, and serine 66. 2 disordered regions span residues 134–159 and 191–301; these read TTTA…ATTT and TRAT…ELGN. The segment covering 191–201 has biased composition (low complexity); that stretch reads TRATTLETPTT. Positions 202-237 are enriched in polar residues; that stretch reads SIPETSVLTEVTTSRLVPSSTAKPRSLPKPSTSRTA. Residues serine 280, serine 283, and serine 330 are each glycosylated (O-linked (Xyl...) (glycosaminoglycan) serine). A helical transmembrane segment spans residues 348–372; that stretch reads VLIAVIVGGVVGALFAAFLVMLLIY. Over 373 to 405 the chain is Cytoplasmic; that stretch reads RMKKKDEGSYTLEEPKQANVTYQKPDKQEEFYA.

This sequence belongs to the syndecan proteoglycan family. O-glycosylated within the Thr/Ser-rich region which could interact with lectin domains on other molecules. As to expression, proximal chondrogenic central core of embryonic limb buds where cartilage differentiation is being initiated.

It localises to the membrane. Cell surface proteoglycan that may bear both heparan sulfate and chondroitin sulfate. The multiple functional domains provide potential sites for mediating the adhesive cell-matrix interactions and cytoskeletal reorganization involved in limb chondrogenesis. Interaction with other matrix ligands as well as phosphorylation and shedding of the ectodomain might be involved in cell shape changes that occur during chondrogenesis. Furthermore, shedding of the ectodomain might break the adhesive interactions that promoted condensation, thus facilitating the deposition of cartilage matrix molecules. This Gallus gallus (Chicken) protein is Syndecan-3 (SDC3).